Reading from the N-terminus, the 977-residue chain is Serine/threonine-protein kinase N2 (977 aa).

3 consecutive REM-1 domains span residues 24–100 (NLDF…HIVV), 114–194 (DTPK…TSEI), and 200–280 (DVTT…ELPK). Positions 298 to 468 (PPNSPRQSIM…LYLEPQGTLF (171 aa)) constitute a C2 domain. 2 disordered regions span residues 342–381 (GRSKTASVSLPGWSPSEARSSFMSRGNKNKSGSSRTLSKS) and 531–576 (AADL…KRNS). Polar residues predominate over residues 358-378 (EARSSFMSRGNKNKSGSSRTL). The Protein kinase domain occupies 650–909 (FKCVAVLGRG…AEEVKRHPFF (260 aa)). Residues 656-664 (LGRGHFGKV) and K679 each bind ATP. Catalysis depends on D775, which acts as the Proton acceptor. An AGC-kinase C-terminal domain is found at 910-977 (RDMDWPGLLA…ADFDYIADWC (68 aa)).

This sequence belongs to the protein kinase superfamily. AGC Ser/Thr protein kinase family. PKC subfamily. Autophosphorylated. Phosphorylated. In terms of processing, proteolytically cleaved.

Its subcellular location is the cytoplasm. The protein localises to the nucleus. It localises to the membrane. The protein resides in the cell projection. It is found in the lamellipodium. Its subcellular location is the cytoskeleton. The protein localises to the cleavage furrow. It localises to the midbody. The protein resides in the cell junction. The catalysed reaction is L-seryl-[protein] + ATP = O-phospho-L-seryl-[protein] + ADP + H(+). It carries out the reaction L-threonyl-[protein] + ATP = O-phospho-L-threonyl-[protein] + ADP + H(+). Kinase activity is activated upon binding to GTP-bound Rho/Rac GTPases. Activated by lipids, particularly cardiolipin and to a lesser extent by other acidic phospholipids and unsaturated fatty acids. Two specific sites, Thr-809 (activation loop of the kinase domain) and Thr-951 (turn motif), may be needed to be phosphorylated for its full activation. Its function is as follows. Pkc-related serine/threonine-protein kinase and Rho/Rac effector protein that participates in specific signal transduction responses in the cell. May play a role in the regulation of cell cycle progression, actin cytoskeleton assembly, cell migration, cell adhesion and transcription activation signaling processes. This is Serine/threonine-protein kinase N2 (pkn2) from Danio rerio (Zebrafish).